The primary structure comprises 295 residues: Cytidine deaminase (295 aa).

CMP/dCMP-type deaminase domains follow at residues 48-168 and 187-295; these read ADDE…FGPA and EETT…YLAI. Residue 89-91 participates in substrate binding; it reads NLE. His102 is a binding site for Zn(2+). The active-site Proton donor is the Glu104. Residues Cys129 and Cys132 each coordinate Zn(2+).

Belongs to the cytidine and deoxycytidylate deaminase family. Homodimer. Requires Zn(2+) as cofactor.

The catalysed reaction is cytidine + H2O + H(+) = uridine + NH4(+). It carries out the reaction 2'-deoxycytidine + H2O + H(+) = 2'-deoxyuridine + NH4(+). Functionally, this enzyme scavenges exogenous and endogenous cytidine and 2'-deoxycytidine for UMP synthesis. The chain is Cytidine deaminase from Vibrio atlanticus (strain LGP32) (Vibrio splendidus (strain Mel32)).